A 363-amino-acid polypeptide reads, in one-letter code: uncharacterized protein (363 aa).

A disordered region spans residues 35-262; that stretch reads TVPGPPGAES…GLSPCCGDGG (228 aa). A compositionally biased stretch (polar residues) spans 56-75; sequence AVSSSRNPNSAGRTPNSYLT. The span at 100 to 116 shows a compositional bias: low complexity; the sequence is GADPALGSLPAAGLSGL.

This is an uncharacterized protein from Homo sapiens (Human).